We begin with the raw amino-acid sequence, 76 residues long: Acyl carrier protein (76 aa).

The 76-residue stretch at 1–76 (MDTFESVKAV…DVVAYIEANK (76 aa)) folds into the Carrier domain. At S36 the chain carries O-(pantetheine 4'-phosphoryl)serine.

The protein belongs to the acyl carrier protein (ACP) family. Post-translationally, 4'-phosphopantetheine is transferred from CoA to a specific serine of apo-ACP by AcpS. This modification is essential for activity because fatty acids are bound in thioester linkage to the sulfhydryl of the prosthetic group.

It is found in the cytoplasm. It participates in lipid metabolism; fatty acid biosynthesis. In terms of biological role, carrier of the growing fatty acid chain in fatty acid biosynthesis. This is Acyl carrier protein from Helicobacter hepaticus (strain ATCC 51449 / 3B1).